An 845-amino-acid chain; its full sequence is ABC transporter A family member 9 (845 aa).

The next 7 membrane-spanning stretches (helical) occupy residues 33–53 (CVQI…NFWV), 192–212 (AFVA…FLGG), 235–255 (IASL…MPLF), 292–312 (IYFI…FAVF), 318–338 (FAMF…SFFL), 347–367 (AASI…SILS), and 417–437 (SKII…ALYL). In terms of domain architecture, ABC transporter spans 531-762 (VIIEGLTKHY…FGDGYSVRIN (232 aa)). An ATP-binding site is contributed by 565 to 572 (GANGAGKT).

It belongs to the ABC transporter superfamily. ABCA family.

It is found in the membrane. This chain is ABC transporter A family member 9 (abcA9), found in Dictyostelium discoideum (Social amoeba).